Here is a 305-residue protein sequence, read N- to C-terminus: Uridylate cyclase (305 aa).

The Mn(2+) site is built by D58 and D102.

Belongs to the adenylyl cyclase class-4/guanylyl cyclase family. Pyrimidine cyclase subfamily. Homodimer. Mn(2+) serves as cofactor.

Its subcellular location is the cytoplasm. The catalysed reaction is GTP = 3',5'-cyclic GMP + diphosphate. It carries out the reaction UTP = 3',5'-cyclic UMP + diphosphate. Its function is as follows. Pycsar (pyrimidine cyclase system for antiphage resistance) provides immunity against bacteriophage. The pyrimidine cyclase (PycC) synthesizes cyclic nucleotides in response to infection; these serve as specific second messenger signals. The signals activate the adjacent effector, leading to bacterial cell death and abortive phage infection. A clade D Pycsar system. In terms of biological role, the pyrimidine cyclase gene of a two-gene Pycsar system, generates cyclic UMP (cUMP) from UTP as well as cGMP from GTP to a lesser extent, has little to no activity on ATP or CTP. Expression of this and adjacent effector MePycTM (AC A0A1C5G2D0) probably confers resistance to bacteriophage. The genes are probably only expressed in response to bacteriophage infection. The polypeptide is Uridylate cyclase (Micromonospora echinofusca).